The sequence spans 652 residues: tRNA 5-methylaminomethyl-2-thiouridine biosynthesis bifunctional protein MnmC (652 aa).

The segment at 1–227 is tRNA (mnm(5)s(2)U34)-methyltransferase; that stretch reads MLSWKNDLTP…KREMLTGKYS (227 aa). The FAD-dependent cmnm(5)s(2)U34 oxidoreductase stretch occupies residues 259 to 652; the sequence is IGAGIAGSTL…ARFLYRRIRK (394 aa).

It in the N-terminal section; belongs to the methyltransferase superfamily. tRNA (mnm(5)s(2)U34)-methyltransferase family. The protein in the C-terminal section; belongs to the DAO family. It depends on FAD as a cofactor.

The protein resides in the cytoplasm. It carries out the reaction 5-aminomethyl-2-thiouridine(34) in tRNA + S-adenosyl-L-methionine = 5-methylaminomethyl-2-thiouridine(34) in tRNA + S-adenosyl-L-homocysteine + H(+). In terms of biological role, catalyzes the last two steps in the biosynthesis of 5-methylaminomethyl-2-thiouridine (mnm(5)s(2)U) at the wobble position (U34) in tRNA. Catalyzes the FAD-dependent demodification of cmnm(5)s(2)U34 to nm(5)s(2)U34, followed by the transfer of a methyl group from S-adenosyl-L-methionine to nm(5)s(2)U34, to form mnm(5)s(2)U34. In Leptospira borgpetersenii serovar Hardjo-bovis (strain JB197), this protein is tRNA 5-methylaminomethyl-2-thiouridine biosynthesis bifunctional protein MnmC.